A 192-amino-acid chain; its full sequence is Xanthine phosphoribosyltransferase (192 aa).

Xanthine is bound by residues Leu-20 and Asn-27. 128-132 contacts 5-phospho-alpha-D-ribose 1-diphosphate; the sequence is AHGEA. Lys-156 provides a ligand contact to xanthine.

It belongs to the purine/pyrimidine phosphoribosyltransferase family. Xpt subfamily. In terms of assembly, homodimer.

It is found in the cytoplasm. The catalysed reaction is XMP + diphosphate = xanthine + 5-phospho-alpha-D-ribose 1-diphosphate. It participates in purine metabolism; XMP biosynthesis via salvage pathway; XMP from xanthine: step 1/1. Its function is as follows. Converts the preformed base xanthine, a product of nucleic acid breakdown, to xanthosine 5'-monophosphate (XMP), so it can be reused for RNA or DNA synthesis. The protein is Xanthine phosphoribosyltransferase of Lactobacillus acidophilus (strain ATCC 700396 / NCK56 / N2 / NCFM).